We begin with the raw amino-acid sequence, 779 residues long: Phosphoribosylformylglycinamidine synthase subunit PurL (779 aa).

His-52 is an active-site residue. ATP contacts are provided by Tyr-55 and Lys-94. Glu-96 contributes to the Mg(2+) binding site. Residues 97 to 100 and Arg-119 each bind substrate; that span reads SHNH. The active-site Proton acceptor is the His-98. Asp-120 contributes to the Mg(2+) binding site. Gln-243 provides a ligand contact to substrate. Asp-271 serves as a coordination point for Mg(2+). 315 to 317 lines the substrate pocket; the sequence is ESQ. 2 residues coordinate ATP: Asn-523 and Gly-560. Asn-561 contacts Mg(2+). Ser-563 is a substrate binding site.

The protein belongs to the FGAMS family. Monomer. Part of the FGAM synthase complex composed of 1 PurL, 1 PurQ and 2 PurS subunits.

Its subcellular location is the cytoplasm. The enzyme catalyses N(2)-formyl-N(1)-(5-phospho-beta-D-ribosyl)glycinamide + L-glutamine + ATP + H2O = 2-formamido-N(1)-(5-O-phospho-beta-D-ribosyl)acetamidine + L-glutamate + ADP + phosphate + H(+). Its pathway is purine metabolism; IMP biosynthesis via de novo pathway; 5-amino-1-(5-phospho-D-ribosyl)imidazole from N(2)-formyl-N(1)-(5-phospho-D-ribosyl)glycinamide: step 1/2. Functionally, part of the phosphoribosylformylglycinamidine synthase complex involved in the purines biosynthetic pathway. Catalyzes the ATP-dependent conversion of formylglycinamide ribonucleotide (FGAR) and glutamine to yield formylglycinamidine ribonucleotide (FGAM) and glutamate. The FGAM synthase complex is composed of three subunits. PurQ produces an ammonia molecule by converting glutamine to glutamate. PurL transfers the ammonia molecule to FGAR to form FGAM in an ATP-dependent manner. PurS interacts with PurQ and PurL and is thought to assist in the transfer of the ammonia molecule from PurQ to PurL. This chain is Phosphoribosylformylglycinamidine synthase subunit PurL, found in Prochlorococcus marinus (strain AS9601).